The chain runs to 394 residues: Multidrug resistance protein D (394 aa).

Topologically, residues 1-8 (MKRQRNVN) are cytoplasmic. The helical transmembrane segment at 9-29 (LLLMLVLLVAVGQMAQTIYIP) threads the bilayer. Over 30-46 (AIADMARDLNVREGAVQ) the chain is Periplasmic. A helical transmembrane segment spans residues 47 to 67 (SVMGAYLLTYGVSQLFYGPIS). The Cytoplasmic portion of the chain corresponds to 68–73 (DRVGRR). Residues 74–94 (PVILVGMSIFMLATLVAVTTS) traverse the membrane as a helical segment. Position 95 (serine 95) is a topological domain, periplasmic. The helical transmembrane segment at 96-116 (LTVLIAASAMQGMGTGVGGVM) threads the bilayer. Residues 117 to 134 (ARTLPRDLYERTQLRHAN) lie on the Cytoplasmic side of the membrane. The chain crosses the membrane as a helical span at residues 135-155 (SLLNMGILVSPLLAPLIGGLL). The Periplasmic portion of the chain corresponds to 156-162 (DTMWNWR). Residues 163–183 (ACYLFLLVLCAGVTFSMARWM) form a helical membrane-spanning segment. Residues 184–212 (PETRPVDAPRTRLLTSYKTLFGNSGFNCY) lie on the Cytoplasmic side of the membrane. Residues 213 to 233 (LLMLIGGLAGIAAFEACSGVL) form a helical membrane-spanning segment. Over 234–242 (MGAVLGLSS) the chain is Periplasmic. Residues 243 to 263 (MTVSILFILPIPAAFFGAWFA) traverse the membrane as a helical segment. Over 264 to 276 (GRPNKRFSTLMWQ) the chain is Cytoplasmic. A helical membrane pass occupies residues 277–297 (SVICCLLAGLLMWIPDWFGVM). Position 298 (asparagine 298) is a topological domain, periplasmic. A helical membrane pass occupies residues 299–319 (VWTLLVPAALFFFGAGMLFPL). Residues 320–329 (ATSGAMEPFP) lie on the Cytoplasmic side of the membrane. A helical transmembrane segment spans residues 330–350 (FLAGTAGALVGGLQNIGSGVL). Residues 351–364 (ASLSAMLPQTGQGS) lie on the Periplasmic side of the membrane. The helical transmembrane segment at 365 to 385 (LGLLMTLMGLLIVLCWLPLAT) threads the bilayer. Topologically, residues 386-394 (RMSHQGQPV) are cytoplasmic.

The protein belongs to the major facilitator superfamily.

It is found in the cell inner membrane. Its function is as follows. Multidrug resistance pump that participates in a low energy shock adaptive response. The protein is Multidrug resistance protein D (emrD) of Escherichia coli (strain K12).